Consider the following 264-residue polypeptide: Thymidylate synthase (264 aa).

Residue Arg-21 coordinates dUMP. His-51 is a (6R)-5,10-methylene-5,6,7,8-tetrahydrofolate binding site. 126 to 127 (RR) is a binding site for dUMP. Cys-146 serves as the catalytic Nucleophile. DUMP contacts are provided by residues 166–169 (RSCD), Asn-177, and 207–209 (HLY). Position 169 (Asp-169) interacts with (6R)-5,10-methylene-5,6,7,8-tetrahydrofolate. Residue Ala-263 participates in (6R)-5,10-methylene-5,6,7,8-tetrahydrofolate binding.

It belongs to the thymidylate synthase family. Bacterial-type ThyA subfamily. As to quaternary structure, homodimer.

It is found in the cytoplasm. The enzyme catalyses dUMP + (6R)-5,10-methylene-5,6,7,8-tetrahydrofolate = 7,8-dihydrofolate + dTMP. It functions in the pathway pyrimidine metabolism; dTTP biosynthesis. Functionally, catalyzes the reductive methylation of 2'-deoxyuridine-5'-monophosphate (dUMP) to 2'-deoxythymidine-5'-monophosphate (dTMP) while utilizing 5,10-methylenetetrahydrofolate (mTHF) as the methyl donor and reductant in the reaction, yielding dihydrofolate (DHF) as a by-product. This enzymatic reaction provides an intracellular de novo source of dTMP, an essential precursor for DNA biosynthesis. In Photorhabdus laumondii subsp. laumondii (strain DSM 15139 / CIP 105565 / TT01) (Photorhabdus luminescens subsp. laumondii), this protein is Thymidylate synthase.